The chain runs to 231 residues: Octanoyl-[acyl-carrier-protein]:protein N-octanoyltransferase LIPT2, mitochondrial (231 aa).

The BPL/LPL catalytic domain maps to 41–224; sequence GTKAGVLLVC…AFKETFKCTL (184 aa). An N6-succinyllysine modification is found at lysine 43. Substrate is bound by residues 85-92, 154-156, and 167-169; these read RGGLATFH, AIG, and GLA. Cysteine 185 serves as the catalytic Acyl-thioester intermediate.

This sequence belongs to the LipB family.

It localises to the mitochondrion. It carries out the reaction octanoyl-[ACP] + L-lysyl-[protein] = N(6)-octanoyl-L-lysyl-[protein] + holo-[ACP] + H(+). The protein operates within protein modification; protein lipoylation via endogenous pathway; protein N(6)-(lipoyl)lysine from octanoyl-[acyl-carrier-protein]: step 1/2. Its function is as follows. Catalyzes the transfer of endogenously produced octanoic acid from octanoyl-acyl-carrier-protein onto the lipoyl domains of lipoate-dependent enzymes such as the protein H of the glycine cleavage system (GCSH). Lipoyl-ACP can also act as a substrate although octanoyl-ACP is likely to be the physiological substrate. This chain is Octanoyl-[acyl-carrier-protein]:protein N-octanoyltransferase LIPT2, mitochondrial, found in Mus musculus (Mouse).